Reading from the N-terminus, the 621-residue chain is MSGVNTTAASQDACYISLLGLAEYFRTSQPPNIKKCIQCLQALFTFQPPSKVEARTHLQMGQVLMAYTRNIDLARQHLEQAWSISEPLMNFDDVKFDTASLLAQLHLQTEQSSHAKAMLRRAVELSQNNVYWHCKLLLQLSQIHANDREYSLASDLLAVGAESAEEAGATYLKVLFLLSRAMILMIERKTNDVLALLNSAGQIIDNNIPNPHQKEYLKVFFLVLQVCYYLALGQVKTVKPSLKQLQMSIQTIMAPNWPSDEVIFGANQLEMFVWLPKEQLYVLVYLVTVSHSMMAGYMDKAQKYTEKALTQIEKLKLQEDKSILSVFKVILLEHIVMCRMVMGNRELAIREIAAARDVCIAAPHRNLLKRHSAQLHCLIGLYSMSTSFFEHAERQFLVCVNETGERDLKLFANLNLAIIYLRTKREADLKQILDAVSTENTHTYSSQALMGGFYYVQGLHAFHKNSFHEAKRFLRETLKMANAEDLNRLTSCSLVLLSHVFLSIGNSKESMNMVTPAMQLASKIPDIHVQLWGSAILKDLHRMSKDAQHEKEAYANHVKYSENLIADQRKCVQSAHHELVNWFQGDPPVTSGASLNLPVAVATTEASTSAIQQPAQFGQFY.

3 TPR repeats span residues 96–129, 451–484, and 491–524; these read FDTA…SQNN, GGFY…ANAE, and SCSL…ASKI.

This sequence belongs to the SCC4/mau-2 family. In terms of assembly, interacts with Nipped-B to form the cohesin loading complex.

The protein localises to the nucleus. The protein resides in the nucleoplasm. Its function is as follows. Required for association of the cohesin complex with chromatin during interphase. Plays a role in sister chromatid cohesion and normal progression through prometaphase. The sequence is that of MAU2 chromatid cohesion factor homolog from Drosophila virilis (Fruit fly).